We begin with the raw amino-acid sequence, 81 residues long: uncharacterized protein (81 aa).

This is an uncharacterized protein from Archaeoglobus fulgidus (strain ATCC 49558 / DSM 4304 / JCM 9628 / NBRC 100126 / VC-16).